The following is a 646-amino-acid chain: Alkyl/aryl-sulfatase BDS1 (646 aa).

Residue methionine 1 is modified to N-acetylmethionine. Zn(2+)-binding residues include histidine 162, histidine 164, aspartate 166, histidine 167, glutamate 273, glutamate 292, and histidine 337.

Belongs to the metallo-beta-lactamase superfamily. Type III sulfatase family. Zn(2+) serves as cofactor.

Its function is as follows. Alkyl/aryl-sulfatase. Enables the use of SDS and 4-nitrocatechol as sulfur source. This Saccharomyces cerevisiae (strain ATCC 204508 / S288c) (Baker's yeast) protein is Alkyl/aryl-sulfatase BDS1 (BDS1).